Reading from the N-terminus, the 533-residue chain is Thromboxane-A synthase (533 aa).

At 1–10 (MEVLGLLKFE) the chain is on the cytoplasmic side. The chain crosses the membrane as a helical span at residues 11 to 31 (VSGTVVTVTLSVVLLALLKWY). Topologically, residues 32-75 (STSAFSRLRKLGIRHPEPSPFVGNLMFFRQGFWESHLELRERYG) are lumenal. The helical transmembrane segment at 76-96 (PLCGYYLGRRMYIVISDPDMI) threads the bilayer. Topologically, residues 97–223 (KEVLVENFSN…QRVFAFSTPR (127 aa)) are cytoplasmic. The chain crosses the membrane as a helical span at residues 224 to 244 (PLLALILSFPSIMVPLARILP). Over 245–335 (NKNRDELNGF…LTVDEIAGQA (91 aa)) the chain is Lumenal. A helical membrane pass occupies residues 336 to 356 (FLFLIAGHEITTNTLSFITYL). Residues 357–533 (LATHPECQER…NGVYVKIVSR (177 aa)) lie on the Cytoplasmic side of the membrane. Cys-479 is a heme binding site.

It belongs to the cytochrome P450 family. In terms of assembly, monomer. Requires heme as cofactor. As to expression, expressed in bone marrow, spleen, lung, thymus, liver, uterus, and macrophages.

It localises to the endoplasmic reticulum membrane. The catalysed reaction is prostaglandin H2 = thromboxane A2. It catalyses the reaction prostaglandin H2 = (12S)-hydroxy-(5Z,8E,10E)-heptadecatrienoate + malonaldehyde. The enzyme catalyses a hydroperoxyeicosatetraenoate = an oxoeicosatetraenoate + H2O. It carries out the reaction (15S)-hydroperoxy-(5Z,8Z,11Z,13E)-eicosatetraenoate = 15-oxo-(5Z,8Z,11Z,13E)-eicosatetraenoate + H2O. The catalysed reaction is (15S)-hydroperoxy-(5Z,8Z,11Z,13E)-eicosatetraenoate + AH2 = (15S)-hydroxy-(5Z,8Z,11Z,13E)-eicosatetraenoate + A + H2O. Catalyzes the conversion of prostaglandin H2 (PGH2) to thromboxane A2 (TXA2), a potent inducer of blood vessel constriction and platelet aggregation. Also cleaves PGH2 to 12-hydroxy-heptadecatrienoicacid (12-HHT) and malondialdehyde, which is known to act as a mediator of DNA damage. 12-HHT and malondialdehyde are formed stoichiometrically in the same amounts as TXA2. Additionally, displays dehydratase activity, toward (15S)-hydroperoxy-(5Z,8Z,11Z,13E)-eicosatetraenoate (15(S)-HPETE) producing 15-KETE and 15-HETE. The sequence is that of Thromboxane-A synthase (Tbxas1) from Rattus norvegicus (Rat).